A 147-amino-acid chain; its full sequence is MKVLLLENVQGLGKKGEIVEVKDGYGQNFLIAKGKAQRATNEVINKYKAQQRKAEELAALEKAEMQQMKKTIESLTLTLHKKVGANDTLFGSITKEEIALALEEHKVSLDKKHIEIAQAIKHTGNFEVQVKLGQGINATLKLEIKAQ.

It belongs to the bacterial ribosomal protein bL9 family.

Binds to the 23S rRNA. The chain is Large ribosomal subunit protein bL9 from Helicobacter hepaticus (strain ATCC 51449 / 3B1).